Here is a 147-residue protein sequence, read N- to C-terminus: uncharacterized protein (147 aa).

It to M.jannaschii MJ0215.

This is an uncharacterized protein from Methanocaldococcus jannaschii (strain ATCC 43067 / DSM 2661 / JAL-1 / JCM 10045 / NBRC 100440) (Methanococcus jannaschii).